We begin with the raw amino-acid sequence, 931 residues long: Translation initiation factor IF-2 (931 aa).

A disordered region spans residues 32–310 (KSASSTVEPP…SSKARKNRLA (279 aa)). Positions 50-59 (FASSGQGNAS) are enriched in polar residues. Positions 82–96 (PAAPSAPKPAAPAAP) are enriched in pro residues. Positions 156 to 168 (GNAPQGGNNANGA) are enriched in low complexity. Gly residues-rich tracts occupy residues 217–238 (RPGQ…GGAK), 248–271 (GQGG…GFQG), and 281–298 (ARGG…GRQG). A tr-type G domain is found at 424–596 (PRPPVVTVMG…VLLTADAELD (173 aa)). Residues 433–440 (GHVDHGKT) form a G1 region. 433-440 (GHVDHGKT) is a GTP binding site. The G2 stretch occupies residues 458–462 (GITQR). Positions 483–486 (DTPG) are G3. GTP-binding positions include 483 to 487 (DTPGH) and 537 to 540 (NKID). The G4 stretch occupies residues 537–540 (NKID). The G5 stretch occupies residues 573 to 575 (SAK).

The protein belongs to the TRAFAC class translation factor GTPase superfamily. Classic translation factor GTPase family. IF-2 subfamily.

The protein localises to the cytoplasm. In terms of biological role, one of the essential components for the initiation of protein synthesis. Protects formylmethionyl-tRNA from spontaneous hydrolysis and promotes its binding to the 30S ribosomal subunits. Also involved in the hydrolysis of GTP during the formation of the 70S ribosomal complex. In Bifidobacterium adolescentis (strain ATCC 15703 / DSM 20083 / NCTC 11814 / E194a), this protein is Translation initiation factor IF-2.